The sequence spans 477 residues: Glycogen synthase (477 aa).

An ADP-alpha-D-glucose-binding site is contributed by Lys15.

The protein belongs to the glycosyltransferase 1 family. Bacterial/plant glycogen synthase subfamily.

It catalyses the reaction [(1-&gt;4)-alpha-D-glucosyl](n) + ADP-alpha-D-glucose = [(1-&gt;4)-alpha-D-glucosyl](n+1) + ADP + H(+). It participates in glycan biosynthesis; glycogen biosynthesis. Functionally, synthesizes alpha-1,4-glucan chains using ADP-glucose. This Anaeromyxobacter dehalogenans (strain 2CP-1 / ATCC BAA-258) protein is Glycogen synthase.